The sequence spans 349 residues: Fructose-1,6-bisphosphatase class 1 (349 aa).

The Mg(2+) site is built by E113, D135, I137, and D138. Substrate is bound by residues 138–141 (DGSS), N230, Y258, and K288. Residue E294 participates in Mg(2+) binding.

This sequence belongs to the FBPase class 1 family. Homotetramer. Mg(2+) serves as cofactor.

Its subcellular location is the cytoplasm. It carries out the reaction beta-D-fructose 1,6-bisphosphate + H2O = beta-D-fructose 6-phosphate + phosphate. Its pathway is carbohydrate biosynthesis; Calvin cycle. The protein is Fructose-1,6-bisphosphatase class 1 of Trichormus variabilis (strain ATCC 29413 / PCC 7937) (Anabaena variabilis).